The sequence spans 203 residues: Probable chemoreceptor glutamine deamidase CheD (203 aa).

It belongs to the CheD family.

The enzyme catalyses L-glutaminyl-[protein] + H2O = L-glutamyl-[protein] + NH4(+). Its function is as follows. Probably deamidates glutamine residues to glutamate on methyl-accepting chemotaxis receptors (MCPs), playing an important role in chemotaxis. The chain is Probable chemoreceptor glutamine deamidase CheD from Herminiimonas arsenicoxydans.